We begin with the raw amino-acid sequence, 157 residues long: Large ribosomal subunit protein mL59 (157 aa).

The protein belongs to the mitochondrion-specific ribosomal protein mL59 family. As to quaternary structure, component of the mitochondrial large ribosomal subunit (mt-LSU). Mature yeast 74S mitochondrial ribosomes consist of a small (37S) and a large (54S) subunit. The 37S small subunit contains a 15S ribosomal RNA (15S mt-rRNA) and 34 different proteins. The 54S large subunit contains a 21S rRNA (21S mt-rRNA) and 46 different proteins.

The protein localises to the mitochondrion. In terms of biological role, component of the mitochondrial ribosome (mitoribosome), a dedicated translation machinery responsible for the synthesis of mitochondrial genome-encoded proteins, including at least some of the essential transmembrane subunits of the mitochondrial respiratory chain. The mitoribosomes are attached to the mitochondrial inner membrane and translation products are cotranslationally integrated into the membrane. In Saccharomyces cerevisiae (strain ATCC 204508 / S288c) (Baker's yeast), this protein is Large ribosomal subunit protein mL59 (MRPL25).